A 186-amino-acid chain; its full sequence is RIO-type serine/threonine-protein kinase Rio1 (186 aa).

K15 is a binding site for ATP. Residue D124 is the Proton acceptor of the active site. Residues N129 and D140 each coordinate Mg(2+). D140 (4-aspartylphosphate intermediate) is an active-site residue.

It belongs to the protein kinase superfamily. RIO-type Ser/Thr kinase family.

The enzyme catalyses L-seryl-[protein] + ATP = O-phospho-L-seryl-[protein] + ADP + H(+). It carries out the reaction L-threonyl-[protein] + ATP = O-phospho-L-threonyl-[protein] + ADP + H(+). It catalyses the reaction ATP + H2O = ADP + phosphate + H(+). Its function is as follows. Despite the protein kinase domain is proposed to act predominantly as an ATPase. This chain is RIO-type serine/threonine-protein kinase Rio1 (rio1), found in Thermoplasma acidophilum (strain ATCC 25905 / DSM 1728 / JCM 9062 / NBRC 15155 / AMRC-C165).